The chain runs to 261 residues: Dienlactone hydrolase 1 (261 aa).

Residues Cys147, Asp194, and His226 contribute to the active site.

The protein belongs to the dienelactone hydrolase family.

Its pathway is xenobiotic degradation. In terms of biological role, dienlactone hydrolase; part of the Fusarium detoxification of benzoxazolinone cluster 1 (FDB1) involved in the degradation of benzoxazolinones produced by the host plant. Maize, wheat, and rye produce the 2 benzoxazinone phytoanticipins 2,4-dihy-droxy-7-methoxy-1,4-benzoxazin-3-one (DIMBOA) and 2,4-dihydroxy-1,4-benzoxazin-3-one (DIBOA) that, due to their inherent instability once released, spontaneously degrade to the more stable corresponding benzoxazolinones, 6-methoxy-2-benzoxazolinone (MBOA) and 2-benzoxazolinone (BOA), respectively. The first step in the detoxification of benzoxazolinones involves the hydrolysis of the cyclic ester bond of benzoxazolinones by the FDB1 cluster gamma-lactamase MBL1 to aminophenols. MBL1 is able to convert BOA into 2-aminophenol (2-AP), as well as MBOA into 5-methoxy-2-aminophenol (2-AMP). The FDB2 cluster N-malonyltransferase FDB2/NAT1 then metabolizes aminophenols via N-malonylation to non-toxic malonamic acids. FDB2/NAT1 converts 2-AP into N-(2-hydroxyphenyl) malonamic acid (HPMA) and 2-AMP into N-(2-hydroxy-4-methoxyphenyl) malonamic acid (HMPMA). The duplicated dienlactone hydrolases DLH1 and DLH2 may provide redundant function for hydrolyzing the lactone moiety in the BOA molecule. The roles of the amidases and other enzymes encoded by the 2 FDB clusters have not been identified so far. In Gibberella moniliformis (strain M3125 / FGSC 7600) (Maize ear and stalk rot fungus), this protein is Dienlactone hydrolase 1.